The chain runs to 113 residues: Iron-sulfur cluster insertion protein ErpA (113 aa).

3 residues coordinate iron-sulfur cluster: cysteine 41, cysteine 105, and cysteine 107.

The protein belongs to the HesB/IscA family. As to quaternary structure, homodimer. Iron-sulfur cluster serves as cofactor.

Functionally, required for insertion of 4Fe-4S clusters for at least IspG. This chain is Iron-sulfur cluster insertion protein ErpA, found in Vibrio parahaemolyticus serotype O3:K6 (strain RIMD 2210633).